A 923-amino-acid chain; its full sequence is DNA mismatch repair protein PMS1 (923 aa).

3 stretches are compositionally biased toward basic and acidic residues: residues aspartate 543–leucine 553, asparagine 565–glutamate 581, and glycine 591–proline 601. A disordered region spans residues aspartate 543–cysteine 603.

Belongs to the DNA mismatch repair MutL/HexB family. Heterodimer of MLH1 and PMS1, called MutLalpha, which is the major MMR MutL activity correcting base-base mismatches as well as IDLs. The heterodimer binds double strand DNA independently of a mismatch with positive cooperativity and has more than one DNA binding site. Forms a ternary complex with either the MSH2-MSH6 (MutSalpha) or the MSH2-MSH3 heterodimer (MutSbeta), which recognize and bind to mismatch DNA. Ternary complex formation is promoted by ATP binding. Expressed at very low levels in mature leaves. Detected in rapidly dividing tissues.

The protein localises to the nucleus. Functionally, required for DNA mismatch repair (MMR), correcting base-base mismatches and insertion-deletion loops (IDLs) resulting from DNA replication, DNA damage or from recombination events between non-identical sequences during meiosis. Component of the MutLalpha heterodimer that forms a ternary complex with the MutS heterodimers, which initially recognize the DNA mismatches. This complex is thought to be responsible for directing the downstream MMR events, including strand discrimination, excision, and resynthesis. Plays a major role in maintaining the genetic stability of simple sequence repeats and in the repair of heteroduplex sites present in meiotic recombination intermediates. Does not seem to be required for homologous somatic recombination. The protein is DNA mismatch repair protein PMS1 (PMS1) of Arabidopsis thaliana (Mouse-ear cress).